The primary structure comprises 305 residues: Transmembrane epididymal protein 1 (305 aa).

Residues 4–24 (FIGHISPGLFLVFYGLYQAII) form a helical membrane-spanning segment. A glycan (N-linked (GlcNAc...) asparagine) is linked at Asn32. 6 consecutive transmembrane segments (helical) span residues 51–71 (LWQIAHAGWLKVVSGSLLIVY), 100–120 (LTMFILLTLDGCVEVVSRSVL), 124–144 (LVLLERGATVLGVYVLLLLLV), 159–179 (SLLILVVFLLMLVLTAELWAP), 187–207 (IETFLFLTMGSWLMQAAFILF), and 223–243 (IMLVTTFFCWHVMINALCMLG). Residues 285-305 (EQQDRDDQAPLLSKSSPCDRA) are disordered.

The protein belongs to the TMEM45 family.

It is found in the membrane. This chain is Transmembrane epididymal protein 1 (Teddm1), found in Rattus norvegicus (Rat).